The sequence spans 153 residues: MEKLDRLSEAFKMLLKQEKCSSQSEIVTALQALGFKNINQSKVSRMLSKFGAIRTRNTKMEMVYQLPTELSIPTTSSPLKNLVLDIDYNEVLIVVKTSPGAAQLIARLLDSMGKSEGILGTIAGDDAIFITPTHSTPMETLIKNITTLFESSF.

The protein belongs to the ArgR family.

It localises to the cytoplasm. Its pathway is amino-acid biosynthesis; L-arginine biosynthesis [regulation]. Regulates arginine biosynthesis genes. The sequence is that of Arginine repressor from Haemophilus ducreyi (strain 35000HP / ATCC 700724).